A 150-amino-acid polypeptide reads, in one-letter code: Lipoprotein signal peptidase (150 aa).

2 helical membrane passes run F58 to T78 and S85 to V107. Catalysis depends on residues D108 and D122. A helical transmembrane segment spans residues V117 to L137.

This sequence belongs to the peptidase A8 family.

Its subcellular location is the cell membrane. The catalysed reaction is Release of signal peptides from bacterial membrane prolipoproteins. Hydrolyzes -Xaa-Yaa-Zaa-|-(S,diacylglyceryl)Cys-, in which Xaa is hydrophobic (preferably Leu), and Yaa (Ala or Ser) and Zaa (Gly or Ala) have small, neutral side chains.. It participates in protein modification; lipoprotein biosynthesis (signal peptide cleavage). This protein specifically catalyzes the removal of signal peptides from prolipoproteins. This Caldicellulosiruptor bescii (strain ATCC BAA-1888 / DSM 6725 / KCTC 15123 / Z-1320) (Anaerocellum thermophilum) protein is Lipoprotein signal peptidase.